The primary structure comprises 561 residues: Potassium-transporting ATPase potassium-binding subunit (561 aa).

12 helical membrane-spanning segments follow: residues 1-21 (MMAS…LLAR), 62-82 (YLLA…LILM), 132-152 (GLTV…FALM), 173-193 (ITLY…VSQG), 253-273 (FVQM…FGDV), 283-303 (LLWS…WAEV), 327-347 (FGIL…CGAV), 356-376 (ALGG…FGGV), 379-399 (GLYG…LMIG), 416-436 (MTAL…ALAM), 483-503 (MLLA…VLAI), and 526-546 (LFIA…FIPA).

The protein belongs to the KdpA family. As to quaternary structure, the system is composed of three essential subunits: KdpA, KdpB and KdpC.

It localises to the cell inner membrane. Its function is as follows. Part of the high-affinity ATP-driven potassium transport (or Kdp) system, which catalyzes the hydrolysis of ATP coupled with the electrogenic transport of potassium into the cytoplasm. This subunit binds the periplasmic potassium ions and delivers the ions to the membrane domain of KdpB through an intramembrane tunnel. This chain is Potassium-transporting ATPase potassium-binding subunit, found in Erwinia tasmaniensis (strain DSM 17950 / CFBP 7177 / CIP 109463 / NCPPB 4357 / Et1/99).